We begin with the raw amino-acid sequence, 327 residues long: Methionyl-tRNA formyltransferase (327 aa).

Residue 113–116 (SILP) coordinates (6S)-5,6,7,8-tetrahydrofolate.

The protein belongs to the Fmt family.

The enzyme catalyses L-methionyl-tRNA(fMet) + (6R)-10-formyltetrahydrofolate = N-formyl-L-methionyl-tRNA(fMet) + (6S)-5,6,7,8-tetrahydrofolate + H(+). Attaches a formyl group to the free amino group of methionyl-tRNA(fMet). The formyl group appears to play a dual role in the initiator identity of N-formylmethionyl-tRNA by promoting its recognition by IF2 and preventing the misappropriation of this tRNA by the elongation apparatus. The protein is Methionyl-tRNA formyltransferase of Colwellia psychrerythraea (strain 34H / ATCC BAA-681) (Vibrio psychroerythus).